An 84-amino-acid polypeptide reads, in one-letter code: Small ribosomal subunit protein bS16 (84 aa).

It belongs to the bacterial ribosomal protein bS16 family.

This Burkholderia multivorans (strain ATCC 17616 / 249) protein is Small ribosomal subunit protein bS16.